A 227-amino-acid chain; its full sequence is Chaperone protein FocC (227 aa).

Positions 1–21 are cleaved as a signal peptide; sequence MRIWAVLASFLVFFYIPQSYA.

It belongs to the periplasmic pilus chaperone family.

The protein resides in the periplasm. Involved in the biogenesis of the F1C fimbriae. The sequence is that of Chaperone protein FocC (focC) from Escherichia coli O6:H1 (strain CFT073 / ATCC 700928 / UPEC).